Reading from the N-terminus, the 485-residue chain is NADH-quinone oxidoreductase subunit N (485 aa).

14 helical membrane passes run 3–23 (LFMP…TDLF), 30–50 (HLAY…VLNW), 67–87 (YASF…MASV), 96–116 (FQGE…MMAS), 120–140 (LITM…LVGF), 154–174 (LLLG…IYGF), 202–222 (FILG…AVPF), 247–267 (AAGF…PLAL), 271–291 (WALI…VLAI), 299–319 (MLGY…AAVG), 332–352 (LFYL…IIAI), 375–395 (ASAL…AGFL), 411–431 (WLMI…FNVI), and 453–473 (LALG…ETLL).

The protein belongs to the complex I subunit 2 family. In terms of assembly, NDH-1 is composed of 14 different subunits. Subunits NuoA, H, J, K, L, M, N constitute the membrane sector of the complex.

It localises to the cell membrane. The catalysed reaction is a quinone + NADH + 5 H(+)(in) = a quinol + NAD(+) + 4 H(+)(out). Functionally, NDH-1 shuttles electrons from NADH, via FMN and iron-sulfur (Fe-S) centers, to quinones in the respiratory chain. The immediate electron acceptor for the enzyme in this species is believed to be ubiquinone. Couples the redox reaction to proton translocation (for every two electrons transferred, four hydrogen ions are translocated across the cytoplasmic membrane), and thus conserves the redox energy in a proton gradient. The protein is NADH-quinone oxidoreductase subunit N of Dehalococcoides mccartyi (strain ATCC BAA-2100 / JCM 16839 / KCTC 5957 / BAV1).